An 81-amino-acid polypeptide reads, in one-letter code: Serine rich endogenous peptide 21 (81 aa).

A signal peptide spans 1 to 40; it reads MLELHFEFIDLNQPKMYKFVVCLLTLSFLLLSGLSNTALA. An SCOOP motif motif is present at residues 65–79; the sequence is KVRVLPSASRRGPGQ. The SxS motif essential for MIK2 binding motif lies at 71 to 73; the sequence is SAS.

It belongs to the serine rich endogenous peptide (SCOOP) phytocytokine family. Interacts with MIK2 (via extracellular leucine-rich repeat domain); this interaction triggers the formation of complex between MIK2 and the BAK1/SERK3 and SERK4 coreceptors, and subsequent BAK1 activation by phosphorylation.

The protein localises to the cell membrane. Its subcellular location is the secreted. The protein resides in the extracellular space. It localises to the apoplast. Brassicaceae-specific phytocytokine (plant endogenous peptide released into the apoplast) perceived by MIK2 in a BAK1/SERK3 and SERK4 coreceptors-dependent manner, that modulates various physiological and antimicrobial processes including growth prevention and reactive oxygen species (ROS) response regulation. In Arabidopsis thaliana (Mouse-ear cress), this protein is Serine rich endogenous peptide 21.